The following is a 156-amino-acid chain: SsrA-binding protein (156 aa).

The protein belongs to the SmpB family.

It localises to the cytoplasm. In terms of biological role, required for rescue of stalled ribosomes mediated by trans-translation. Binds to transfer-messenger RNA (tmRNA), required for stable association of tmRNA with ribosomes. tmRNA and SmpB together mimic tRNA shape, replacing the anticodon stem-loop with SmpB. tmRNA is encoded by the ssrA gene; the 2 termini fold to resemble tRNA(Ala) and it encodes a 'tag peptide', a short internal open reading frame. During trans-translation Ala-aminoacylated tmRNA acts like a tRNA, entering the A-site of stalled ribosomes, displacing the stalled mRNA. The ribosome then switches to translate the ORF on the tmRNA; the nascent peptide is terminated with the 'tag peptide' encoded by the tmRNA and targeted for degradation. The ribosome is freed to recommence translation, which seems to be the essential function of trans-translation. The chain is SsrA-binding protein from Maricaulis maris (strain MCS10) (Caulobacter maris).